Reading from the N-terminus, the 436-residue chain is D-amino acid dehydrogenase (436 aa).

Residue 3 to 17 participates in FAD binding; the sequence is ILILGSGVIGVTSAW.

The protein belongs to the DadA oxidoreductase family. It depends on FAD as a cofactor.

It catalyses the reaction a D-alpha-amino acid + A + H2O = a 2-oxocarboxylate + AH2 + NH4(+). The protein operates within amino-acid degradation; D-alanine degradation; NH(3) and pyruvate from D-alanine: step 1/1. In terms of biological role, oxidative deamination of D-amino acids. This is D-amino acid dehydrogenase from Photorhabdus laumondii subsp. laumondii (strain DSM 15139 / CIP 105565 / TT01) (Photorhabdus luminescens subsp. laumondii).